The sequence spans 68 residues: Large ribosomal subunit protein bL31 (68 aa).

Positions 16, 18, 36, and 39 each coordinate Zn(2+).

It belongs to the bacterial ribosomal protein bL31 family. Type A subfamily. In terms of assembly, part of the 50S ribosomal subunit. The cofactor is Zn(2+).

Binds the 23S rRNA. The polypeptide is Large ribosomal subunit protein bL31 (Sorangium cellulosum (strain So ce56) (Polyangium cellulosum (strain So ce56))).